Consider the following 390-residue polypeptide: Queuine tRNA-ribosyltransferase (390 aa).

Catalysis depends on Asp92, which acts as the Proton acceptor. Substrate contacts are provided by residues 92–96 (DSGGF), Asp146, Gln195, and Gly222. Positions 253–259 (GVGTPED) are RNA binding. The active-site Nucleophile is the Asp272. The interval 277–281 (TRNAR) is RNA binding; important for wobble base 34 recognition. Positions 310, 312, 315, and 354 each coordinate Zn(2+).

It belongs to the queuine tRNA-ribosyltransferase family. As to quaternary structure, homodimer. Within each dimer, one monomer is responsible for RNA recognition and catalysis, while the other monomer binds to the replacement base PreQ1. It depends on Zn(2+) as a cofactor.

It carries out the reaction 7-aminomethyl-7-carbaguanine + guanosine(34) in tRNA = 7-aminomethyl-7-carbaguanosine(34) in tRNA + guanine. The protein operates within tRNA modification; tRNA-queuosine biosynthesis. Its function is as follows. Catalyzes the base-exchange of a guanine (G) residue with the queuine precursor 7-aminomethyl-7-deazaguanine (PreQ1) at position 34 (anticodon wobble position) in tRNAs with GU(N) anticodons (tRNA-Asp, -Asn, -His and -Tyr). Catalysis occurs through a double-displacement mechanism. The nucleophile active site attacks the C1' of nucleotide 34 to detach the guanine base from the RNA, forming a covalent enzyme-RNA intermediate. The proton acceptor active site deprotonates the incoming PreQ1, allowing a nucleophilic attack on the C1' of the ribose to form the product. After dissociation, two additional enzymatic reactions on the tRNA convert PreQ1 to queuine (Q), resulting in the hypermodified nucleoside queuosine (7-(((4,5-cis-dihydroxy-2-cyclopenten-1-yl)amino)methyl)-7-deazaguanosine). This Verminephrobacter eiseniae (strain EF01-2) protein is Queuine tRNA-ribosyltransferase.